Consider the following 113-residue polypeptide: Flagellar hook-basal body complex protein FliE (113 aa).

This sequence belongs to the FliE family.

The protein localises to the bacterial flagellum basal body. This chain is Flagellar hook-basal body complex protein FliE, found in Rhizobium etli (strain CIAT 652).